The chain runs to 196 residues: Probable malonic semialdehyde reductase RutE (196 aa).

This sequence belongs to the nitroreductase family. HadB/RutE subfamily. FMN serves as cofactor.

It catalyses the reaction 3-hydroxypropanoate + NADP(+) = 3-oxopropanoate + NADPH + H(+). Functionally, may reduce toxic product malonic semialdehyde to 3-hydroxypropionic acid, which is excreted. In Shigella sonnei (strain Ss046), this protein is Probable malonic semialdehyde reductase RutE.